We begin with the raw amino-acid sequence, 219 residues long: Oxaloacetate tautomerase YcgM (219 aa).

Residues Glu-70, Glu-72, and Asp-101 each coordinate Mg(2+).

The protein belongs to the FAH family. It depends on a divalent metal cation as a cofactor.

It catalyses the reaction oxaloacetate = enol-oxaloacetate. Its function is as follows. Tautomerase that converts enol-oxaloacetate to the keto form of oxaloacetate. This is Oxaloacetate tautomerase YcgM from Escherichia coli (strain K12).